The following is a 280-amino-acid chain: Tobamovirus multiplication protein 2A (280 aa).

Over 1 to 13 (MACRGCLECLLKL) the chain is Cytoplasmic. A helical transmembrane segment spans residues 14–34 (LNFLLAVAGLGMIGYGIYLFV). The Extracellular portion of the chain corresponds to 35–78 (EYKRVTDNSVTFDLTNGDQSYVSFGRPILMAVSLSSNIFDNLPK). The chain crosses the membrane as a helical span at residues 79–99 (AWFIYLFIGIGVALFVISCCG). Residues 100-113 (CVGTCSRSVCCLSC) are Cytoplasmic-facing. A helical transmembrane segment spans residues 114-134 (YSLLLILLILVELGFAAFIFF). Residues 135–162 (DNSWRDELPSDRTGNFDTIYNFLRENWK) lie on the Extracellular side of the membrane. Residues 163 to 183 (IVRWVALGAVVFEALLFLLAL) traverse the membrane as a helical segment. Topologically, residues 184–280 (MVRAANTPAE…NEEKGRCTIM (97 aa)) are cytoplasmic. Phosphoserine is present on residues S196 and S233. The tract at residues 258–280 (SESHRFQQMPAQPNEEKGRCTIM) is disordered. A compositionally biased stretch (basic and acidic residues) spans 271 to 280 (NEEKGRCTIM).

It belongs to the tetraspanin (TM4SF) family. As to quaternary structure, homodimer. Constituent of tobamovirus replication complex. Interacts with TOM1. As to expression, expressed in rosette leaves.

The protein resides in the vacuole membrane. Its function is as follows. Necessary for the efficient intracellular multiplication of tobamoviruses, being a component of the replication complex. The polypeptide is Tobamovirus multiplication protein 2A (TOM2A) (Arabidopsis thaliana (Mouse-ear cress)).